The chain runs to 276 residues: Phosphate import ATP-binding protein PstB (276 aa).

An ABC transporter domain is found at valine 23–isoleucine 271. Position 62 to 69 (glycine 62 to serine 69) interacts with ATP.

It belongs to the ABC transporter superfamily. Phosphate importer (TC 3.A.1.7) family. The complex is composed of two ATP-binding proteins (PstB), two transmembrane proteins (PstC and PstA) and a solute-binding protein (PstS).

It is found in the cell membrane. It catalyses the reaction phosphate(out) + ATP + H2O = ADP + 2 phosphate(in) + H(+). Functionally, part of the ABC transporter complex PstSACB involved in phosphate import. Responsible for energy coupling to the transport system. This Oceanobacillus iheyensis (strain DSM 14371 / CIP 107618 / JCM 11309 / KCTC 3954 / HTE831) protein is Phosphate import ATP-binding protein PstB.